We begin with the raw amino-acid sequence, 145 residues long: D-aminoacyl-tRNA deacylase (145 aa).

The short motif at 137-138 is the Gly-cisPro motif, important for rejection of L-amino acids element; sequence GP.

Belongs to the DTD family. In terms of assembly, homodimer.

The protein resides in the cytoplasm. It catalyses the reaction glycyl-tRNA(Ala) + H2O = tRNA(Ala) + glycine + H(+). The enzyme catalyses a D-aminoacyl-tRNA + H2O = a tRNA + a D-alpha-amino acid + H(+). Its function is as follows. An aminoacyl-tRNA editing enzyme that deacylates mischarged D-aminoacyl-tRNAs. Also deacylates mischarged glycyl-tRNA(Ala), protecting cells against glycine mischarging by AlaRS. Acts via tRNA-based rather than protein-based catalysis; rejects L-amino acids rather than detecting D-amino acids in the active site. By recycling D-aminoacyl-tRNA to D-amino acids and free tRNA molecules, this enzyme counteracts the toxicity associated with the formation of D-aminoacyl-tRNA entities in vivo and helps enforce protein L-homochirality. This Shewanella halifaxensis (strain HAW-EB4) protein is D-aminoacyl-tRNA deacylase.